A 265-amino-acid polypeptide reads, in one-letter code: Glutamate racemase (265 aa).

Substrate contacts are provided by residues 7–8 and 39–40; these read DS and YG. Cys70 functions as the Proton donor/acceptor in the catalytic mechanism. Substrate is bound at residue 71 to 72; sequence NT. Residue Cys179 is the Proton donor/acceptor of the active site. Residue 180-181 participates in substrate binding; the sequence is TH.

It belongs to the aspartate/glutamate racemases family.

It catalyses the reaction L-glutamate = D-glutamate. It functions in the pathway cell wall biogenesis; peptidoglycan biosynthesis. Provides the (R)-glutamate required for cell wall biosynthesis. The sequence is that of Glutamate racemase from Gloeobacter violaceus (strain ATCC 29082 / PCC 7421).